The primary structure comprises 170 residues: MVKSQKVIDVLNTHYNLNLELGSIYAQYAHIADDQFSMPFLAKFIADLSNDKLGVHKNLISEYARKVEIPLHTKFSVDVNFKPANPKELIKHILDTELKVRKHVANMAKVCLEENDFETFSFVKWFVDDGIKDFDDVRTIHDFFENATNNLQVEYAIRKYLKQMKVEEEK.

The region spanning 1–148 is the Ferritin-like diiron domain; that stretch reads MVKSQKVIDV…TIHDFFENAT (148 aa).

This is an uncharacterized protein from Ureaplasma parvum serovar 3 (strain ATCC 700970).